Here is a 621-residue protein sequence, read N- to C-terminus: Methionine--tRNA ligase (621 aa).

Positions 11–21 (PYANGPRHIGH) match the 'HIGH' region motif. Positions 143, 146, 156, and 159 each coordinate Zn(2+). A 'KMSKS' region motif is present at residues 347–351 (KFSSS). Position 350 (S350) interacts with ATP.

It belongs to the class-I aminoacyl-tRNA synthetase family. MetG type 1 subfamily. Monomer. It depends on Zn(2+) as a cofactor.

The protein resides in the cytoplasm. The catalysed reaction is tRNA(Met) + L-methionine + ATP = L-methionyl-tRNA(Met) + AMP + diphosphate. Its function is as follows. Is required not only for elongation of protein synthesis but also for the initiation of all mRNA translation through initiator tRNA(fMet) aminoacylation. This chain is Methionine--tRNA ligase, found in Bifidobacterium longum (strain NCC 2705).